The sequence spans 569 residues: MTKDAESTMTVGTYLAQRLVEIGIKNHFVVPGDYNLRLLDFLEYYPGLSEIGCCNELNCAFAAEGYARSNGIACAVVTYSVGALTAFDGIGGAYAENLPVILVSGSPNTNDLSSGHLLHHTLGTHDFEYQMEIAKKLTCAAVAIKRAEDAPVMIDHAIRQAILQHKPVYIEIPTNMANQPCPVPGPISAVISPEISDKESLEKATDIAAELISKKEKPILLAGPKLRAAGAESAFVKLAEALNCAAFIMPAAKGFYSEEHKNYAGVYWGEVSSSETTKAVYESSDLVIGAGVLFNDYSTVGWRAAPNPNILLNSDYTSVSIPGYVFSRVYMAEFLELLAKKVSKKPATLEAYNKARPQTVVPKAAEPKAALNRVEVMRQIQGLVDSNTTLYAETGDSWFNGLQMKLPAGAKFEVEMQWGHIGWSVPSAMGYAVAAPERRTIVMVGDGSFQLTGQEISQMIRHKLPVLIFLLNNRGYTIEIQIHDGPYNRIQNWDFAAFCESLNGETGKAKGLHAKTGEELTSAIKVALQNKEGPTLIECAIDTDDCTQELVDWGKAVASANARPPTADN.

Substrate-binding residues include Asp-33 and His-120. Residue Ser-233 is modified to Phosphoserine. The thiamine pyrophosphate binding stretch occupies residues 396-478 (DSWFNGLQMK…FLLNNRGYTI (83 aa)). Mg(2+)-binding residues include Asp-446, Asn-473, and Gly-475. Position 479 (Glu-479) interacts with substrate. Thr-521 carries the post-translational modification Phosphothreonine. Ser-522 carries the post-translational modification Phosphoserine.

The protein belongs to the TPP enzyme family. In terms of assembly, homotetramer. Requires a metal cation as cofactor. The cofactor is thiamine diphosphate.

The catalysed reaction is a 2-oxocarboxylate + H(+) = an aldehyde + CO2. In Schizosaccharomyces pombe (strain 972 / ATCC 24843) (Fission yeast), this protein is Probable pyruvate decarboxylase Pdc101 (pdc101).